Reading from the N-terminus, the 63-residue chain is uncharacterized protein (63 aa).

This is an uncharacterized protein from Escherichia coli (strain K12).